We begin with the raw amino-acid sequence, 412 residues long: Carboxypeptidase B1 (412 aa).

An N-terminal signal peptide occupies residues 1–18; that stretch reads MIPRIVVVLLSVLAVVTA. The propeptide at 19 to 75 is activation peptide; it reads RRSYEGYKVYGIVPESPDEAEILYQIRQSNPDLDFWHLTKQPGDEARVLVAPKDQRS. Positions 118 to 408 constitute a Peptidase M14 domain; the sequence is SYLRHNEINE…VGIKAMALKV (291 aa). The Zn(2+) site is built by His175 and Glu178. 175–178 serves as a coordination point for a peptide; the sequence is HARE. Asn205 carries an N-linked (GlcNAc...) asparagine glycan. A peptide-binding positions include Arg230 and 246-247; that span reads NR. Cysteines 240 and 263 form a disulfide. Residue His299 coordinates Zn(2+). A peptide-binding positions include 300-301 and Tyr351; that span reads SY. Glu374 serves as the catalytic Proton donor/acceptor. N-linked (GlcNAc...) asparagine glycosylation is present at Asn395.

The protein belongs to the peptidase M14 family. Monomer. Interacts with Dengue virus type 2 (DENV2, MY89-88549 strain) envelope protein E. Interacts with Dengue virus envelope protein E type 3, type 2, type 4 and type 1 with decreasing strength. It depends on Zn(2+) as a cofactor. In terms of tissue distribution, expressed in midgut (at protein level).

It is found in the endoplasmic reticulum. The catalysed reaction is Preferential release of a C-terminal lysine or arginine amino acid.. Inhibited by S.tuberosum metallocarboxypeptidase inhibitor. Functionally, carboxypeptidase that preferentially hydrolyzes arginine and lysine residues at the C-terminus. During infection by dengue virus, may play a role in preventing viral packaging, maturation, and release from the midgut. In Aedes aegypti (Yellowfever mosquito), this protein is Carboxypeptidase B1.